Consider the following 355-residue polypeptide: F-box only protein 32 (355 aa).

Residues 62-67 (KKRKKD) carry the Nuclear localization signal motif. A Nuclear export signal motif is present at residues 169-173 (LLQTL). The F-box domain occupies 223-271 (LTFTDLPLCLQLNIMQRLSDGRDLVSLGQVAPDLHVLSEDRLLWKKLCQ). The Bipartite nuclear localization signal motif lies at 280–295 (RKRLILSDKGQLDWKK).

As to quaternary structure, part of the SCF (SKP1-CUL1-F-box) E3 ubiquitin-protein ligase complex SCF(FBXO32) formed of CUL1, SKP1, RBX1 and FBXO32.

The protein resides in the cytoplasm. It localises to the nucleus. It functions in the pathway protein modification; protein ubiquitination. Its function is as follows. Substrate recognition component of a SCF (SKP1-CUL1-F-box protein) E3 ubiquitin-protein ligase complex which mediates the ubiquitination and subsequent proteasomal degradation of target proteins. Probably recognizes and binds to phosphorylated target proteins during skeletal muscle atrophy. Recognizes TERF1. The polypeptide is F-box only protein 32 (FBXO32) (Sus scrofa (Pig)).